Consider the following 405-residue polypeptide: Cytoplasmic 60S subunit biogenesis factor ZNF622 (405 aa).

2 U1-type zinc fingers span residues 4-28 and 67-91; these read YTCITCRVAFKDADIQRAHYKTDWH and TYCTVCSKRFSTFNAYENHLKSKKH. A disordered region spans residues 135 to 230; that stretch reads AIRAQPSSSP…GVEEEEEKQA (96 aa). Residues 194–228 are compositionally biased toward acidic residues; sequence AEEEEDSEEGWEEMDSDEDLGSEEEMEGVEEEEEK.

It belongs to the REI1 family. As to quaternary structure, homo- and heterodimer. Associates with pre-60S ribosomal particles. As to expression, mainly expressed in the ovary. Mainly expressed in the testis.

It is found in the cytoplasm. It localises to the nucleus. Its function is as follows. Pre-60S-associated cytoplasmic factor involved in the cytoplasmic maturation of the 60S subunit. This is Cytoplasmic 60S subunit biogenesis factor ZNF622 (ZNF622) from Gallus gallus (Chicken).